The chain runs to 518 residues: Anthranilate synthase component 1 (518 aa).

Residues Ser-41 and 291–293 each bind L-tryptophan; that span reads PYM. 328–329 serves as a coordination point for chorismate; it reads GS. Mg(2+) is bound at residue Glu-361. Chorismate is bound by residues Tyr-449, Arg-469, 483–485, and Gly-485; that span reads GCG. Residue Glu-498 participates in Mg(2+) binding.

It belongs to the anthranilate synthase component I family. As to quaternary structure, heterotetramer consisting of two non-identical subunits: a beta subunit (TrpG) and a large alpha subunit (TrpE). The cofactor is Mg(2+).

The catalysed reaction is chorismate + L-glutamine = anthranilate + pyruvate + L-glutamate + H(+). Its pathway is amino-acid biosynthesis; L-tryptophan biosynthesis; L-tryptophan from chorismate: step 1/5. Its activity is regulated as follows. Feedback inhibited by tryptophan. Part of a heterotetrameric complex that catalyzes the two-step biosynthesis of anthranilate, an intermediate in the biosynthesis of L-tryptophan. In the first step, the glutamine-binding beta subunit (TrpG) of anthranilate synthase (AS) provides the glutamine amidotransferase activity which generates ammonia as a substrate that, along with chorismate, is used in the second step, catalyzed by the large alpha subunit of AS (TrpE) to produce anthranilate. In the absence of TrpG, TrpE can synthesize anthranilate directly from chorismate and high concentrations of ammonia. This is Anthranilate synthase component 1 (trpE) from Haemophilus influenzae (strain ATCC 51907 / DSM 11121 / KW20 / Rd).